A 616-amino-acid chain; its full sequence is Polypeptide N-acetylgalactosaminyltransferase 3 (616 aa).

A helical; Signal-anchor for type II membrane protein membrane pass occupies residues 13-33 (FFHWKLWKFSIIVFVFLVFLF). The interval 182 to 291 (LPTTSIIIVF…YGWLEPLLAR (110 aa)) is catalytic subdomain A. Mn(2+)-binding residues include Asp275, His277, and His413. Residues 354–416 (PIRTPTFAGG…PCSVVGHVFR (63 aa)) form a catalytic subdomain B region. N-linked (GlcNAc...) asparagine glycosylation occurs at Asn482. One can recognise a Ricin B-type lectin domain in the interval 512 to 616 (NRMCLDVGEN…FQKWIFGQND (105 aa)). A disulfide bond links Cys515 and Cys533. UDP-N-acetyl-alpha-D-galactosamine is bound by residues Asp517, Glu520, His534, and Asn539. A disulfide bond links Cys588 and Cys601.

Belongs to the glycosyltransferase 2 family. GalNAc-T subfamily. The cofactor is Mn(2+).

Its subcellular location is the golgi apparatus. It localises to the golgi stack membrane. The enzyme catalyses L-seryl-[protein] + UDP-N-acetyl-alpha-D-galactosamine = a 3-O-[N-acetyl-alpha-D-galactosaminyl]-L-seryl-[protein] + UDP + H(+). The catalysed reaction is L-threonyl-[protein] + UDP-N-acetyl-alpha-D-galactosamine = a 3-O-[N-acetyl-alpha-D-galactosaminyl]-L-threonyl-[protein] + UDP + H(+). The protein operates within protein modification; protein glycosylation. In terms of biological role, catalyzes the initial reaction in O-linked oligosaccharide biosynthesis, the transfer of an N-acetyl-D-galactosamine residue to a serine or threonine residue on the protein receptor. Glycosylates FGF23. This is Polypeptide N-acetylgalactosaminyltransferase 3 (GALNT3) from Taeniopygia guttata (Zebra finch).